The following is a 431-amino-acid chain: 23S rRNA (uracil(1939)-C(5))-methyltransferase RlmD (431 aa).

The 59-residue stretch at 10 to 68 (RVTTRQIITVKVNDLDSFGQGVARHNGKALFIPGLLPEESAEVIITEDKKQFARARVSR) folds into the TRAM domain. 4 residues coordinate [4Fe-4S] cluster: cysteine 81, cysteine 87, cysteine 90, and cysteine 161. Residues glutamine 264, phenylalanine 293, asparagine 298, glutamate 314, asparagine 341, and aspartate 362 each contribute to the S-adenosyl-L-methionine site. The active-site Nucleophile is cysteine 388.

Belongs to the class I-like SAM-binding methyltransferase superfamily. RNA M5U methyltransferase family. RlmD subfamily.

It catalyses the reaction uridine(1939) in 23S rRNA + S-adenosyl-L-methionine = 5-methyluridine(1939) in 23S rRNA + S-adenosyl-L-homocysteine + H(+). Catalyzes the formation of 5-methyl-uridine at position 1939 (m5U1939) in 23S rRNA. This Salmonella typhi protein is 23S rRNA (uracil(1939)-C(5))-methyltransferase RlmD.